The following is a 684-amino-acid chain: MRSFWSFPSSCLTAVASSVPRPASRSQAARVLHNLPRALTAFPQPSRTTRAFSLTSRLFQHLRAASDEETMTVNTTDRLAALRSLMKERNVDIYVVPSEDSHASEYIAECDARRAFISGFTGSAGTAVVTLDKAALATDGRYFNQASKQLDENWHLLKTGLQDVPTWQEWTADESAGGKSVGIDPTLISPAVADKLDGDIKKHGGAGLKAINENLVDLVWGDSRPPRPSEPVFLLGAKYSGKGTAEKLTNLRKELEKKKAAAFVVSMLDEVAWLFNLRGNDITYNPVFFSYAIVTKDSATLYVDESKLNDEVKQYLAENGTGIKPYNDLFKDTEILANAAKSTSESDKPTKYLVSNKASWALKLALGGEKHVDEVRSPIGDAKAIKNETELEGMRRCHIRDGAALIKYFAWLEDQLINKKAKLDEVEAADQLEQFRSEQADFVGLSFDTISSTGPNGAIIHYKPERGACSVIDPDAIYLCDSGAQFCDGTTDVTRTLHFGQPTDAERKSYTLVLKGNIALDTAVFPKGTSGFALDALARQFLWKYGLDYRHGTGHGVGSFLNVHEGPIGIGTRKAYIDVPLAPGNVLSIEPGYYEDGNYGIRIENLAIVREVKTEHQFGDKPYLGFEHVTMVPYCRKLIDESLLTQEEKDWLNKSNEEIRKNMAGYFDGDQLTTEWLLRETSPF.

Residues Asp481, Asp492, Glu590, and Glu604 each coordinate Mn(2+).

This sequence belongs to the peptidase M24B family. It depends on Mn(2+) as a cofactor.

The enzyme catalyses Release of any N-terminal amino acid, including proline, that is linked to proline, even from a dipeptide or tripeptide.. Catalyzes the removal of a penultimate prolyl residue from the N-termini of peptides. This chain is Probable Xaa-Pro aminopeptidase P (ampp), found in Neurospora crassa (strain ATCC 24698 / 74-OR23-1A / CBS 708.71 / DSM 1257 / FGSC 987).